Here is a 104-residue protein sequence, read N- to C-terminus: MAGKAHRLSAEERDQLLPNLRAVGWNELEGRDAIFKQFHFKDFNRAFGFMTRVALQAEKLDHHPEWFNVYNKVHITLSTHECAGLSERDVNLASFIEQVAVSMT.

Residue alanine 2 is modified to N-acetylalanine. Substrate is bound by residues 61-63 (DHH) and 78-81 (STHE).

It belongs to the pterin-4-alpha-carbinolamine dehydratase family. In terms of assembly, homotetramer and homodimer. Heterotetramer with HNF1A; formed by a dimer of dimers. Interacts with HNF1B (via HNF-p1 domain); the interaction increases HNF1B transactivation activity.

The protein localises to the cytoplasm. It localises to the nucleus. It catalyses the reaction (4aS,6R)-4a-hydroxy-L-erythro-5,6,7,8-tetrahydrobiopterin = (6R)-L-erythro-6,7-dihydrobiopterin + H2O. Involved in tetrahydrobiopterin biosynthesis. Seems to both prevent the formation of 7-pterins and accelerate the formation of quinonoid-BH2. Coactivator for HNF1A-dependent transcription. Regulates the dimerization of homeodomain protein HNF1A and enhances its transcriptional activity. Also acts as a coactivator for HNF1B-dependent transcription. The protein is Pterin-4-alpha-carbinolamine dehydratase (PCBD1) of Bos taurus (Bovine).